Here is a 304-residue protein sequence, read N- to C-terminus: Lipoyl synthase (304 aa).

[4Fe-4S] cluster-binding residues include Cys41, Cys46, Cys52, Cys68, Cys72, Cys75, and Ser281. The region spanning 54–270 (GARRTATFMI…RKIAMEKGFK (217 aa)) is the Radical SAM core domain. Positions 282 to 304 (YHADEQVNEAAKEKQRQGEEQLN) are disordered.

It belongs to the radical SAM superfamily. Lipoyl synthase family. It depends on [4Fe-4S] cluster as a cofactor.

The protein resides in the cytoplasm. It carries out the reaction [[Fe-S] cluster scaffold protein carrying a second [4Fe-4S](2+) cluster] + N(6)-octanoyl-L-lysyl-[protein] + 2 oxidized [2Fe-2S]-[ferredoxin] + 2 S-adenosyl-L-methionine + 4 H(+) = [[Fe-S] cluster scaffold protein] + N(6)-[(R)-dihydrolipoyl]-L-lysyl-[protein] + 4 Fe(3+) + 2 hydrogen sulfide + 2 5'-deoxyadenosine + 2 L-methionine + 2 reduced [2Fe-2S]-[ferredoxin]. It participates in protein modification; protein lipoylation via endogenous pathway; protein N(6)-(lipoyl)lysine from octanoyl-[acyl-carrier-protein]. Its function is as follows. Catalyzes the radical-mediated insertion of two sulfur atoms into the C-6 and C-8 positions of the octanoyl moiety bound to the lipoyl domains of lipoate-dependent enzymes, thereby converting the octanoylated domains into lipoylated derivatives. The polypeptide is Lipoyl synthase (Staphylococcus epidermidis (strain ATCC 35984 / DSM 28319 / BCRC 17069 / CCUG 31568 / BM 3577 / RP62A)).